A 276-amino-acid chain; its full sequence is MLLRFTKMHGLGNDFMVIDLVSQHAHIQPKHAKQWGDRHTGVGFDQLLIVEPPQNPDVDFRYRIFNSDGSEVEQCGNGARCFARFVVDKRLTVKRKIKVETKGGIIELDIRPDGQIRVDMGPPRLVPAEIPFQAEREALSYSLEVDGQQVELAAASMGNPHAVLRVDSVERAPVHELGPKIEHHPRFPQRVNVGFLQVVDRRHARLRVWERGAGETQACGTGACAAAVAAIRQGWMDSPVQIELPGGRLSIEWAGPGQPVMMTGPAVRVFEGQVRL.

Residues Asn13, Gln46, and Asn66 each contribute to the substrate site. Cys75 (proton donor) is an active-site residue. Substrate is bound by residues 76-77 (GN), Asn159, Asn192, and 210-211 (ER). Cys219 acts as the Proton acceptor in catalysis. 220–221 (GT) is a substrate binding site.

This sequence belongs to the diaminopimelate epimerase family. As to quaternary structure, homodimer.

The protein localises to the cytoplasm. The enzyme catalyses (2S,6S)-2,6-diaminopimelate = meso-2,6-diaminopimelate. Its pathway is amino-acid biosynthesis; L-lysine biosynthesis via DAP pathway; DL-2,6-diaminopimelate from LL-2,6-diaminopimelate: step 1/1. Functionally, catalyzes the stereoinversion of LL-2,6-diaminopimelate (L,L-DAP) to meso-diaminopimelate (meso-DAP), a precursor of L-lysine and an essential component of the bacterial peptidoglycan. The polypeptide is Diaminopimelate epimerase (Stutzerimonas stutzeri (strain A1501) (Pseudomonas stutzeri)).